Reading from the N-terminus, the 250-residue chain is Phosphoribosylaminoimidazole-succinocarboxamide synthase (250 aa).

The protein belongs to the SAICAR synthetase family.

It carries out the reaction 5-amino-1-(5-phospho-D-ribosyl)imidazole-4-carboxylate + L-aspartate + ATP = (2S)-2-[5-amino-1-(5-phospho-beta-D-ribosyl)imidazole-4-carboxamido]succinate + ADP + phosphate + 2 H(+). It participates in purine metabolism; IMP biosynthesis via de novo pathway; 5-amino-1-(5-phospho-D-ribosyl)imidazole-4-carboxamide from 5-amino-1-(5-phospho-D-ribosyl)imidazole-4-carboxylate: step 1/2. The sequence is that of Phosphoribosylaminoimidazole-succinocarboxamide synthase from Parasynechococcus marenigrum (strain WH8102).